We begin with the raw amino-acid sequence, 441 residues long: Ribulose bisphosphate carboxylase large chain (441 aa).

K4 is subject to N6,N6,N6-trimethyllysine. Substrate is bound by residues N113 and T163. Residue K165 is the Proton acceptor of the active site. K167 is a substrate binding site. Mg(2+)-binding residues include K191, D193, and E194. N6-carboxylysine is present on K191. The Proton acceptor role is filled by H284. Positions 285, 317, and 369 each coordinate substrate.

The protein belongs to the RuBisCO large chain family. Type I subfamily. In terms of assembly, heterohexadecamer of 8 large chains and 8 small chains; disulfide-linked. The disulfide link is formed within the large subunit homodimers. Mg(2+) is required as a cofactor. In terms of processing, the disulfide bond which can form in the large chain dimeric partners within the hexadecamer appears to be associated with oxidative stress and protein turnover.

It localises to the plastid. It is found in the chloroplast. The enzyme catalyses 2 (2R)-3-phosphoglycerate + 2 H(+) = D-ribulose 1,5-bisphosphate + CO2 + H2O. It catalyses the reaction D-ribulose 1,5-bisphosphate + O2 = 2-phosphoglycolate + (2R)-3-phosphoglycerate + 2 H(+). Its function is as follows. RuBisCO catalyzes two reactions: the carboxylation of D-ribulose 1,5-bisphosphate, the primary event in carbon dioxide fixation, as well as the oxidative fragmentation of the pentose substrate in the photorespiration process. Both reactions occur simultaneously and in competition at the same active site. The protein is Ribulose bisphosphate carboxylase large chain of Darlingtonia californica (California pitcher plant).